We begin with the raw amino-acid sequence, 415 residues long: MARHPQLRLVKALLLLGLNPVSASLQDQHCESLSLASNISGLQCNASVDLIGTCWPRSPAGQLVVRPCPAFFYGVRYNTTNNGYRECLANGSWAARVNYSECQEILNEEKKSKVHYHVAVIINYLGHCISLVALLVAFVLFLRLRSIRCLRNIIHWNLISAFILRNATWFVVQLTMSPEVHQSNVGWCRLVTAAYNYFHVTNFFWMFGEGCYLHTAIVLTYSTDRLRKWMFICIGWGVPFPIIVAWAIGKLYYDNEKCWFGKRPGVYTDYIYQGPMILVLLINFIFLFNIVRILMTKLRASTTSETIQYRKAVKATLVLLPLLGITYMLFFVNPGEDEVSRVVFIYFNSFLESFQGFFVSVFYCFLNSEVRSAIRKRWHRWQDKHSIRARVARAMSIPTSPTRVSFHSIKQSTAV.

The signal sequence occupies residues 1–23 (MARHPQLRLVKALLLLGLNPVSA). Over 24–111 (SLQDQHCESL…CQEILNEEKK (88 aa)) the chain is Extracellular. Cystine bridges form between Cys30/Cys54, Cys44/Cys87, and Cys68/Cys102. 3 N-linked (GlcNAc...) asparagine glycosylation sites follow: Asn38, Asn78, and Asn98. The interval 99 to 108 (YSECQEILNE) is important for peptide agonist binding. Residues 112 to 142 (SKVHYHVAVIINYLGHCISLVALLVAFVLFL) form a helical membrane-spanning segment. Residues 143–149 (RLRSIRC) are Cytoplasmic-facing. The helical transmembrane segment at 150 to 174 (LRNIIHWNLISAFILRNATWFVVQL) threads the bilayer. The Extracellular segment spans residues 175 to 189 (TMSPEVHQSNVGWCR). A disulfide bridge connects residues Cys188 and Cys258. The helical transmembrane segment at 190 to 218 (LVTAAYNYFHVTNFFWMFGEGCYLHTAIV) threads the bilayer. The Cytoplasmic segment spans residues 219 to 225 (LTYSTDR). A helical membrane pass occupies residues 226 to 253 (LRKWMFICIGWGVPFPIIVAWAIGKLYY). Topologically, residues 254–269 (DNEKCWFGKRPGVYTD) are extracellular. A helical transmembrane segment spans residues 270–295 (YIYQGPMILVLLINFIFLFNIVRILM). The important for antagonist binding stretch occupies residues 280-290 (LLINFIFLFNI). The Cytoplasmic segment spans residues 296 to 306 (TKLRASTTSET). At Ser301 the chain carries Phosphoserine; by PKA. Residues 307 to 331 (IQYRKAVKATLVLLPLLGITYMLFF) form a helical membrane-spanning segment. Residues 332–338 (VNPGEDE) lie on the Extracellular side of the membrane. The chain crosses the membrane as a helical span at residues 339-368 (VSRVVFIYFNSFLESFQGFFVSVFYCFLNS). Topologically, residues 369–415 (EVRSAIRKRWHRWQDKHSIRARVARAMSIPTSPTRVSFHSIKQSTAV) are cytoplasmic.

Belongs to the G-protein coupled receptor 2 family. Heterodimer; heterodimerizes with GPER1. Interacts (via N-terminal extracellular domain) with CRH and UCN. Interacts with DLG1; this inhibits endocytosis of CRHR1 after agonist binding. Post-translationally, C-terminal Ser or Thr residues may be phosphorylated. In terms of processing, phosphorylation at Ser-301 by PKA prevents maximal coupling to Gq-protein, and thereby negatively regulates downstream signaling. As to expression, expressed abundantly in the pituitary, cerebral cortex, hippocampus, amygdala and cerebellum.

It localises to the cell membrane. It is found in the endosome. Functionally, G-protein coupled receptor for CRH (corticotropin-releasing factor) and UCN (urocortin). Has high affinity for CRH and UCN. Ligand binding causes a conformation change that triggers signaling via guanine nucleotide-binding proteins (G proteins) and down-stream effectors, such as adenylate cyclase. Promotes the activation of adenylate cyclase, leading to increased intracellular cAMP levels. Inhibits the activity of the calcium channel CACNA1H. Required for normal embryonic development of the adrenal gland and for normal hormonal responses to stress. Plays a role in the response to anxiogenic stimuli. This Macaca mulatta (Rhesus macaque) protein is Corticotropin-releasing factor receptor 1 (CRHR1).